Reading from the N-terminus, the 880-residue chain is Protein translocase subunit SecA (880 aa).

ATP contacts are provided by residues glutamine 86, 104-108, and aspartate 511; that span reads GEGKT. The tract at residues 837–871 is disordered; the sequence is AQKIQRSDGDGARRPVEKPKKIGRNDPCPCGSGKK. Residues 841 to 860 show a composition bias toward basic and acidic residues; it reads QRSDGDGARRPVEKPKKIGR. Residues cysteine 864, cysteine 866, cysteine 875, and cysteine 876 each coordinate Zn(2+).

It belongs to the SecA family. Monomer and homodimer. Part of the essential Sec protein translocation apparatus which comprises SecA, SecYEG and auxiliary proteins SecDF. Other proteins may also be involved. The cofactor is Zn(2+).

The protein localises to the cell inner membrane. Its subcellular location is the cytoplasm. It carries out the reaction ATP + H2O + cellular proteinSide 1 = ADP + phosphate + cellular proteinSide 2.. In terms of biological role, part of the Sec protein translocase complex. Interacts with the SecYEG preprotein conducting channel. Has a central role in coupling the hydrolysis of ATP to the transfer of proteins into and across the cell membrane, serving as an ATP-driven molecular motor driving the stepwise translocation of polypeptide chains across the membrane. This Thermodesulfovibrio yellowstonii (strain ATCC 51303 / DSM 11347 / YP87) protein is Protein translocase subunit SecA.